The sequence spans 234 residues: Peptidase E (234 aa).

Residues Ser120, Asp135, and His157 each act as charge relay system in the active site.

It belongs to the peptidase S51 family.

It localises to the cytoplasm. It carries out the reaction Dipeptidase E catalyzes the hydrolysis of dipeptides Asp-|-Xaa. It does not act on peptides with N-terminal Glu, Asn or Gln, nor does it cleave isoaspartyl peptides.. Hydrolyzes dipeptides containing N-terminal aspartate residues. May play a role in allowing the cell to use peptide aspartate to spare carbon otherwise required for the synthesis of the aspartate family of amino acids. This chain is Peptidase E, found in Salmonella gallinarum (strain 287/91 / NCTC 13346).